Here is a 213-residue protein sequence, read N- to C-terminus: ATP phosphoribosyltransferase (213 aa).

It belongs to the ATP phosphoribosyltransferase family. Short subfamily. Heteromultimer composed of HisG and HisZ subunits.

It is found in the cytoplasm. It carries out the reaction 1-(5-phospho-beta-D-ribosyl)-ATP + diphosphate = 5-phospho-alpha-D-ribose 1-diphosphate + ATP. It participates in amino-acid biosynthesis; L-histidine biosynthesis; L-histidine from 5-phospho-alpha-D-ribose 1-diphosphate: step 1/9. Its function is as follows. Catalyzes the condensation of ATP and 5-phosphoribose 1-diphosphate to form N'-(5'-phosphoribosyl)-ATP (PR-ATP). Has a crucial role in the pathway because the rate of histidine biosynthesis seems to be controlled primarily by regulation of HisG enzymatic activity. This is ATP phosphoribosyltransferase from Synechococcus sp. (strain RCC307).